The primary structure comprises 441 residues: pH-response regulator protein palC (441 aa).

The 350-residue stretch at 3–352 (ISYTGQLPTT…GAAYAAILQL (350 aa)) folds into the BRO1 domain. 2 disordered regions span residues 278–304 (RKDDGSPSLAPVSSFESNRDLSSTSSG) and 414–441 (KWTPQTSLDLGEDTSSSAPKYSGQGSYY).

Belongs to the palC family.

Required for the proteolytic cleavage of the transcription factor RIM101 in response to alkaline ambient pH. The sequence is that of pH-response regulator protein palC from Yarrowia lipolytica (strain CLIB 122 / E 150) (Yeast).